Consider the following 1134-residue polypeptide: DNA damage-binding protein 1 (1134 aa).

The protein belongs to the DDB1 family. In terms of assembly, interacts with cdt-1 and cul-4. Expressed at high levels in the spermatheca of adult hermaphrodites.

Its subcellular location is the cytoplasm. It is found in the nucleus. The protein operates within protein modification; protein ubiquitination. Plays a role in DNA repair. May be a component of an E3 ubiquitin-protein ligase which promotes histone ubiquitination in response to UV irradiation. Histone ubiquitination may be important for subsequent DNA repair. Promotes the degradation of the replication licensing factor cdt-1 during S-phase, thereby preventing rereplication of DNA during a single round of cell division. This Caenorhabditis elegans protein is DNA damage-binding protein 1 (ddb-1).